A 543-amino-acid polypeptide reads, in one-letter code: CTP synthase (543 aa).

Residues 1-265 (MTRFVFITGG…DTEVLRHFGL (265 aa)) form an amidoligase domain region. Ser13 contacts CTP. Ser13 serves as a coordination point for UTP. An ATP-binding site is contributed by 14–19 (SLGKGI). Tyr54 lines the L-glutamine pocket. Asp71 contacts ATP. The Mg(2+) site is built by Asp71 and Glu139. CTP is bound by residues 146–148 (DIE), 186–191 (KTKPTQ), and Lys222. Residues 186–191 (KTKPTQ) and Lys222 each bind UTP. The 252-residue stretch at 291 to 542 (RIAVVGKYTA…VGAAVKKMRL (252 aa)) folds into the Glutamine amidotransferase type-1 domain. Gly354 is a binding site for L-glutamine. Cys381 (nucleophile; for glutamine hydrolysis) is an active-site residue. L-glutamine is bound by residues 382–385 (FGMQ), Glu405, and Arg470. Active-site residues include His515 and Glu517.

This sequence belongs to the CTP synthase family. In terms of assembly, homotetramer.

It catalyses the reaction UTP + L-glutamine + ATP + H2O = CTP + L-glutamate + ADP + phosphate + 2 H(+). The catalysed reaction is L-glutamine + H2O = L-glutamate + NH4(+). It carries out the reaction UTP + NH4(+) + ATP = CTP + ADP + phosphate + 2 H(+). It functions in the pathway pyrimidine metabolism; CTP biosynthesis via de novo pathway; CTP from UDP: step 2/2. Allosterically activated by GTP, when glutamine is the substrate; GTP has no effect on the reaction when ammonia is the substrate. The allosteric effector GTP functions by stabilizing the protein conformation that binds the tetrahedral intermediate(s) formed during glutamine hydrolysis. Inhibited by the product CTP, via allosteric rather than competitive inhibition. Its function is as follows. Catalyzes the ATP-dependent amination of UTP to CTP with either L-glutamine or ammonia as the source of nitrogen. Regulates intracellular CTP levels through interactions with the four ribonucleotide triphosphates. The protein is CTP synthase of Gluconacetobacter diazotrophicus (strain ATCC 49037 / DSM 5601 / CCUG 37298 / CIP 103539 / LMG 7603 / PAl5).